A 202-amino-acid chain; its full sequence is Virulence protein F (202 aa).

A compositionally biased stretch (polar residues) spans 1–15 (MRNSSLRDASGSNDA). A disordered region spans residues 1–21 (MRNSSLRDASGSNDAQVPHKT). Residues 20–42 (KTELLNLPDHVLTEVAKRLATNN) form the F-box domain.

In terms of assembly, component of SCF(virF) E3 ubiquitin ligase complexes. Interacts with host VIP1 and SKP1A. Interacts with Arabidopsis thaliana ENAP1/VFP3 and VFP5 in the host cell nucleus.

The protein resides in the host nucleus. Functionally, in the host plant, component of SCF(virF) E3 ubiquitin ligase complexes, which mediate the ubiquitination and subsequent proteasomal degradation of target proteins such as the host VIP1, after its implication in T-DNA translocation to the host nucleus. Required for the formation of tumors of a wild-type size on certain plant species only. This Agrobacterium tumefaciens (strain 15955) protein is Virulence protein F.